A 438-amino-acid chain; its full sequence is Putative truncated GMC-type inactive oxidoreductase L894 (438 aa).

The signal sequence occupies residues 1–26; the sequence is MYVFLLFSRYKIFYVYIKKMAHRSRC. 79–109 contributes to the FAD binding site; that stretch reads DIVIIGAGAAGCVLAYYLTKFSDLKIILLEA.

It belongs to the GMC oxidoreductase family. FAD is required as a cofactor.

It localises to the virion. The polypeptide is Putative truncated GMC-type inactive oxidoreductase L894 (Acanthamoeba polyphaga (Amoeba)).